A 264-amino-acid polypeptide reads, in one-letter code: MSNSNIHTTAVIAEGTKLGNNVKIGPYCIIGPKVVLHDNVELKSHVVIEGITEIGENTVIYPFASIGQPPQILKYANERSSTIIGSNNTIREYVTVQAGSQGGGMMTRVGNNNLFMVGVHIGHDCKIGNNVVFANYVSLAGHIGVGDYAIIGGLSAVHQYARIGEYSMIGGLSPVGADVIPFGLVSSKRAVLEGLNLIGMNRKGFDKVKSLSALKAIEEIFSGEGNFAERIKQVAEKYNNNSIVIQIIDFLNQDSSRAFCRFEK.

Belongs to the transferase hexapeptide repeat family. LpxA subfamily. Homotrimer.

It localises to the cytoplasm. The enzyme catalyses a (3R)-hydroxyacyl-[ACP] + UDP-N-acetyl-alpha-D-glucosamine = a UDP-3-O-[(3R)-3-hydroxyacyl]-N-acetyl-alpha-D-glucosamine + holo-[ACP]. It participates in glycolipid biosynthesis; lipid IV(A) biosynthesis; lipid IV(A) from (3R)-3-hydroxytetradecanoyl-[acyl-carrier-protein] and UDP-N-acetyl-alpha-D-glucosamine: step 1/6. Functionally, involved in the biosynthesis of lipid A, a phosphorylated glycolipid that anchors the lipopolysaccharide to the outer membrane of the cell. This chain is Acyl-[acyl-carrier-protein]--UDP-N-acetylglucosamine O-acyltransferase, found in Rickettsia peacockii (strain Rustic).